Here is a 503-residue protein sequence, read N- to C-terminus: Aspartyl/glutamyl-tRNA(Asn/Gln) amidotransferase subunit B (503 aa).

Belongs to the GatB/GatE family. GatB subfamily. In terms of assembly, heterotrimer of A, B and C subunits.

The catalysed reaction is L-glutamyl-tRNA(Gln) + L-glutamine + ATP + H2O = L-glutaminyl-tRNA(Gln) + L-glutamate + ADP + phosphate + H(+). It carries out the reaction L-aspartyl-tRNA(Asn) + L-glutamine + ATP + H2O = L-asparaginyl-tRNA(Asn) + L-glutamate + ADP + phosphate + 2 H(+). Functionally, allows the formation of correctly charged Asn-tRNA(Asn) or Gln-tRNA(Gln) through the transamidation of misacylated Asp-tRNA(Asn) or Glu-tRNA(Gln) in organisms which lack either or both of asparaginyl-tRNA or glutaminyl-tRNA synthetases. The reaction takes place in the presence of glutamine and ATP through an activated phospho-Asp-tRNA(Asn) or phospho-Glu-tRNA(Gln). The polypeptide is Aspartyl/glutamyl-tRNA(Asn/Gln) amidotransferase subunit B (Nocardia farcinica (strain IFM 10152)).